A 388-amino-acid polypeptide reads, in one-letter code: Phosphoglycerate kinase (388 aa).

Residues 21-23 (DLN), Arg36, 59-62 (HLGR), Arg114, and Arg147 each bind substrate. ATP-binding positions include Lys198, Glu315, and 341–344 (GGDT).

The protein belongs to the phosphoglycerate kinase family. In terms of assembly, monomer.

Its subcellular location is the cytoplasm. It catalyses the reaction (2R)-3-phosphoglycerate + ATP = (2R)-3-phospho-glyceroyl phosphate + ADP. Its pathway is carbohydrate degradation; glycolysis; pyruvate from D-glyceraldehyde 3-phosphate: step 2/5. This is Phosphoglycerate kinase from Buchnera aphidicola subsp. Schizaphis graminum (strain Sg).